A 104-amino-acid polypeptide reads, in one-letter code: Large ribosomal subunit protein bL21 (104 aa).

It belongs to the bacterial ribosomal protein bL21 family. In terms of assembly, part of the 50S ribosomal subunit. Contacts protein L20.

In terms of biological role, this protein binds to 23S rRNA in the presence of protein L20. The protein is Large ribosomal subunit protein bL21 of Pseudomonas putida (strain GB-1).